A 400-amino-acid chain; its full sequence is N(alpha)-acyl-glutamine aminoacylase (400 aa).

The protein belongs to the peptidase M20 family. Zn(2+) serves as cofactor.

It carries out the reaction an N(2)-acyl-L-glutamine + H2O = a carboxylate + L-glutamine. The catalysed reaction is N(2)-[(2E)-3-methylhex-2-enoyl]-L-glutaminate + H2O = (2E)-3-methylhex-2-enoate + L-glutamine. It catalyses the reaction N(2)-(3-hydroxy-3-methylhexanoyl)-L-glutaminate + H2O = 3-hydroxy-3-methylhexanoate + L-glutamine. With respect to regulation, partial loss of activity with the combination Mn(2+) and chelating agents. Activity is lost in presence of 0.5 mM dithiothreitol. In terms of biological role, hydrolyzes odorless N-alpha-acyl-L-glutamine conjugates of short- and medium-chain fatty acids, releasing human axillary malodor compounds. The enzyme is highly specific for the glutamine residue but has a low specificity for the acyl part of the substrate. The two most common products are 3-methyl-2-hexenoic acid (3M2H) and 3-hydroxy-3-methyl-hexanoic acid (HMHA), which are produced from the odorless precursors N-alpha-3-methyl-2-hexenoyl-L-glutamine (3M2H-Gln) and N-alpha-3-hydroxy-3-methylhexanoyl-L-glutamine (HMHA-Gln). In addition, over 28 different carboxylic acids contributing to human body odor are released by this enzyme from odorless axilla secretions, including several aliphatic 3-hydroxy acids with 4-Me branches, 3,4-unsaturated, 4-Et-branched aliphatic acids, and a variety of degradation products of amino acids. The protein is N(alpha)-acyl-glutamine aminoacylase of Corynebacterium striatum.